The following is a 151-amino-acid chain: SsrA-binding protein (151 aa).

It belongs to the SmpB family.

The protein resides in the cytoplasm. In terms of biological role, required for rescue of stalled ribosomes mediated by trans-translation. Binds to transfer-messenger RNA (tmRNA), required for stable association of tmRNA with ribosomes. tmRNA and SmpB together mimic tRNA shape, replacing the anticodon stem-loop with SmpB. tmRNA is encoded by the ssrA gene; the 2 termini fold to resemble tRNA(Ala) and it encodes a 'tag peptide', a short internal open reading frame. During trans-translation Ala-aminoacylated tmRNA acts like a tRNA, entering the A-site of stalled ribosomes, displacing the stalled mRNA. The ribosome then switches to translate the ORF on the tmRNA; the nascent peptide is terminated with the 'tag peptide' encoded by the tmRNA and targeted for degradation. The ribosome is freed to recommence translation, which seems to be the essential function of trans-translation. The protein is SsrA-binding protein of Campylobacter concisus (strain 13826).